The sequence spans 906 residues: Interference hedgehog (906 aa).

The signal sequence occupies residues 1 to 20 (MSPLTSSLLLFSLLTSSLEA). The Extracellular portion of the chain corresponds to 21 to 715 (IPVLQPSFPP…SHNETVSMSP (695 aa)). 4 Ig-like C2-type domains span residues 39–144 (PGVR…TARL), 134–236 (PLVV…ISSS), 252–341 (PHLL…INVT), and 346–433 (PRIT…LQVN). Cysteine 62 and cysteine 128 form a disulfide bridge. Asparagine 85, asparagine 104, asparagine 148, and asparagine 209 each carry an N-linked (GlcNAc...) asparagine glycan. Cystine bridges form between cysteine 173–cysteine 220 and cysteine 276–cysteine 324. N-linked (GlcNAc...) asparagine glycosylation is found at asparagine 339 and asparagine 388. Cysteine 367 and cysteine 415 are disulfide-bonded. A compositionally biased stretch (polar residues) spans 427 to 439 (GTLLQVNPKQIQS). The tract at residues 427–476 (GTLLQVNPKQIQSEPRETGSGGGFGSHRSMKPVNHGQKPTKMIPPSPPNV) is disordered. Fibronectin type-III domains follow at residues 470 to 578 (PPSP…LQPG) and 586 to 681 (VPEL…TQRP). Asparagine 475 carries N-linked (GlcNAc...) asparagine glycosylation. Heparin is bound by residues arginine 506, lysine 512, lysine 514, and arginine 552. An N-linked (GlcNAc...) asparagine glycan is attached at asparagine 568. The disordered stretch occupies residues 673–713 (LKQGRTQRPRASTTEEPTIQGIGDRDTTSHNQPSHNETVSM). 2 stretches are compositionally biased toward polar residues: residues 676 to 689 (GRTQ…TEEP) and 701 to 713 (SHNQ…TVSM). A helical membrane pass occupies residues 716–736 (MLTGTIGGGALLLILLVSAFL). Topologically, residues 737–906 (CMCRRRSPRG…SSGSLNSVGV (170 aa)) are cytoplasmic. Residues 789–906 (AQQQQQQLDE…SSGSLNSVGV (118 aa)) form a disordered region. Composition is skewed to low complexity over residues 854–866 (GNNN…SEAG) and 890–906 (SSRS…SVGV).

This sequence belongs to the immunoglobulin superfamily. IHOG family. As to quaternary structure, homodimer. Heterotetramer; 2 iHog chains bind 2 hh chains when facilitated by heparin, heparin is required to promote high-affinity interactions between hh and iHog.

The protein localises to the membrane. In terms of biological role, mediates response to the active Hedgehog (Hh) protein signal in embryos, functioning upstream or at the level of patched (ptc). The sequence is that of Interference hedgehog from Drosophila persimilis (Fruit fly).